The sequence spans 399 residues: Acetate kinase (399 aa).

Asn-7 is a Mg(2+) binding site. Residue Lys-14 participates in ATP binding. Residue Arg-91 coordinates substrate. The Proton donor/acceptor role is filled by Asp-148. ATP is bound by residues 208-212 (HLGNG), 283-285 (DFR), and 331-335 (GLGEN). Glu-384 contributes to the Mg(2+) binding site.

Belongs to the acetokinase family. Homodimer. The cofactor is Mg(2+). Requires Mn(2+) as cofactor.

It localises to the cytoplasm. It catalyses the reaction acetate + ATP = acetyl phosphate + ADP. It participates in metabolic intermediate biosynthesis; acetyl-CoA biosynthesis; acetyl-CoA from acetate: step 1/2. Functionally, catalyzes the formation of acetyl phosphate from acetate and ATP. Can also catalyze the reverse reaction. This Desulfitobacterium hafniense (strain Y51) protein is Acetate kinase.